The primary structure comprises 182 residues: MSEELIRRYSITGSRRFSNYWWSSVIFLGASGFLLTGLSSYLNVNLLPFIHAENIIFFPQGLVMCFYGILGLIFSVYLGLTIFWSVGSGFNEFNKKDGLVRIFRWGFPGKNRRIDLSYALTDVEAIRVELQEGINPRRTIYLCVKGNREIPVTRIGQPMSLEEVETQAAELAKFLQIDLFLK.

2 consecutive transmembrane segments (helical) span residues 22–42 (WSSV…SSYL) and 63–83 (VMCF…LTIF).

It belongs to the Ycf4 family.

Its subcellular location is the plastid. It is found in the chloroplast thylakoid membrane. In terms of biological role, seems to be required for the assembly of the photosystem I complex. The polypeptide is Photosystem I assembly protein Ycf4 (Oltmannsiellopsis viridis (Marine flagellate)).